The following is a 95-amino-acid chain: Aspartyl/glutamyl-tRNA(Asn/Gln) amidotransferase subunit C (95 aa).

Belongs to the GatC family. Heterotrimer of A, B and C subunits.

The catalysed reaction is L-glutamyl-tRNA(Gln) + L-glutamine + ATP + H2O = L-glutaminyl-tRNA(Gln) + L-glutamate + ADP + phosphate + H(+). It catalyses the reaction L-aspartyl-tRNA(Asn) + L-glutamine + ATP + H2O = L-asparaginyl-tRNA(Asn) + L-glutamate + ADP + phosphate + 2 H(+). Allows the formation of correctly charged Asn-tRNA(Asn) or Gln-tRNA(Gln) through the transamidation of misacylated Asp-tRNA(Asn) or Glu-tRNA(Gln) in organisms which lack either or both of asparaginyl-tRNA or glutaminyl-tRNA synthetases. The reaction takes place in the presence of glutamine and ATP through an activated phospho-Asp-tRNA(Asn) or phospho-Glu-tRNA(Gln). This Chloroherpeton thalassium (strain ATCC 35110 / GB-78) protein is Aspartyl/glutamyl-tRNA(Asn/Gln) amidotransferase subunit C.